The following is a 508-amino-acid chain: Glycerol kinase (508 aa).

T14 contacts ADP. Positions 14, 15, and 16 each coordinate ATP. T14 is a sn-glycerol 3-phosphate binding site. ADP is bound at residue R18. Sn-glycerol 3-phosphate-binding residues include R84, E85, Y136, and D245. 5 residues coordinate glycerol: R84, E85, Y136, D245, and Q246. ADP-binding residues include T267 and G314. Residues T267, G314, and Q318 each coordinate ATP. N419 is an ADP binding site.

This sequence belongs to the FGGY kinase family.

The enzyme catalyses glycerol + ATP = sn-glycerol 3-phosphate + ADP + H(+). It functions in the pathway polyol metabolism; glycerol degradation via glycerol kinase pathway; sn-glycerol 3-phosphate from glycerol: step 1/1. With respect to regulation, inhibited by fructose 1,6-bisphosphate (FBP). Its function is as follows. Key enzyme in the regulation of glycerol uptake and metabolism. Catalyzes the phosphorylation of glycerol to yield sn-glycerol 3-phosphate. The chain is Glycerol kinase from Bordetella pertussis (strain Tohama I / ATCC BAA-589 / NCTC 13251).